A 215-amino-acid polypeptide reads, in one-letter code: Elongation factor Ts (215 aa).

Residues 80-83 are involved in Mg(2+) ion dislocation from EF-Tu; it reads TDFA.

The protein belongs to the EF-Ts family.

It localises to the cytoplasm. Associates with the EF-Tu.GDP complex and induces the exchange of GDP to GTP. It remains bound to the aminoacyl-tRNA.EF-Tu.GTP complex up to the GTP hydrolysis stage on the ribosome. The chain is Elongation factor Ts from Acetivibrio thermocellus (strain ATCC 27405 / DSM 1237 / JCM 9322 / NBRC 103400 / NCIMB 10682 / NRRL B-4536 / VPI 7372) (Clostridium thermocellum).